The primary structure comprises 298 residues: ADP/ATP translocase 2 (298 aa).

Position 1 is an N-acetylmethionine (methionine 1). The Mitochondrial intermembrane portion of the chain corresponds to 1-7 (MTDAAVS). Threonine 2 carries the post-translational modification N-acetylthreonine; in ADP/ATP translocase 2, N-terminally processed. Residues 6 to 98 (VSFAKDFLAG…FAFKDKYKQI (93 aa)) form a Solcar 1 repeat. Serine 7 is subject to Phosphoserine. Residues 8–37 (FAKDFLAGGVAAAISKTAVAPIERVKLLLQ) traverse the membrane as a helical segment. N6-malonyllysine is present on lysine 23. Residues 38-74 (VQHASKQITADKQYKGIIDCVVRIPKEQGVLSFWRGN) are Mitochondrial matrix-facing. Lysine 43 is subject to N6-succinyllysine. Lysine 52 carries the N6,N6,N6-trimethyllysine; alternate modification. Position 52 is an N6,N6-dimethyllysine; alternate (lysine 52). Lysine 52 is subject to N6-methyllysine; alternate. Residues 75-99 (LANVIRYFPTQALNFAFKDKYKQIF) form a helical membrane-spanning segment. Arginine 80 and lysine 92 together coordinate ADP. N6-malonyllysine occurs at positions 92 and 96. Topologically, residues 100 to 109 (LGGVDKRTQF) are mitochondrial intermembrane. Lysine 105 carries the post-translational modification N6-acetyllysine; alternate. Residue lysine 105 is modified to N6-succinyllysine; alternate. The helical transmembrane segment at 110-130 (WRYFAGNLASGGAAGATSLCF) threads the bilayer. Solcar repeat units lie at residues 111–201 (RYFA…AKGM) and 212–297 (ISWM…IKKF). Residues 131–178 (VYPLDFARTRLAADVGKAGAEREFRGLGDCLVKIYKSDGIRGLYQGFN) lie on the Mitochondrial matrix side of the membrane. Lysine 147 carries the N6-methyllysine; alternate modification. At lysine 147 the chain carries N6-acetyllysine; alternate. Lysine 147 carries the N6-succinyllysine; alternate modification. An N6-malonyllysine; alternate modification is found at lysine 147. Residues lysine 163 and lysine 166 each carry the N6-acetyllysine modification. A helical membrane pass occupies residues 179 to 199 (VSVQGIIIYRAAYFGIYDTAK). Residues 200 to 210 (GMLPDPKNTHI) are Mitochondrial intermembrane-facing. A helical membrane pass occupies residues 211-231 (FISWMIAQSVTAVAGLTSYPF). At 232–273 (DTVRRRMMMQSGRKGTDIMYTGTLDCWRKIARDEGAKAFFKG) the chain is on the mitochondrial matrix side. Arginine 235 provides a ligand contact to ADP. The tract at residues 235–240 (RRRMMM) is important for transport activity. The Nucleotide carrier signature motif motif lies at 235-240 (RRRMMM). Lysine 268 carries the N6-acetyllysine; alternate modification. Lysine 268 is modified (N6-succinyllysine; alternate). A helical membrane pass occupies residues 274–291 (AWSNVLRGMGGAFVLVLY). Residues 292–298 (DEIKKFT) lie on the Mitochondrial intermembrane side of the membrane.

This sequence belongs to the mitochondrial carrier (TC 2.A.29) family. Monomer. Component of the MMXD complex, which includes CIAO1, ERCC2, CIAO2B, MMS19 and SLC25A5/ANT2. Interacts with AK4. Interacts with TIMM44; leading to inhibit the presequence translocase TIMM23, thereby promoting stabilization of PINK1. In terms of processing, trimethylated by ANTKMT at Lys-52.

It is found in the mitochondrion inner membrane. It localises to the membrane. The catalysed reaction is ADP(in) + ATP(out) = ADP(out) + ATP(in). It carries out the reaction H(+)(in) = H(+)(out). The matrix-open state (m-state) is inhibited by the membrane-permeable bongkrekic acid (BKA). The cytoplasmic-open state (c-state) is inhibited by the membrane-impermeable toxic inhibitor carboxyatractyloside (CATR). Proton transporter activity is inhibited by ADP:ATP antiporter activity. Its function is as follows. ADP:ATP antiporter that mediates import of ADP into the mitochondrial matrix for ATP synthesis, and export of ATP out to fuel the cell. Cycles between the cytoplasmic-open state (c-state) and the matrix-open state (m-state): operates by the alternating access mechanism with a single substrate-binding site intermittently exposed to either the cytosolic (c-state) or matrix (m-state) side of the inner mitochondrial membrane. In addition to its ADP:ATP antiporter activity, also involved in mitochondrial uncoupling and mitochondrial permeability transition pore (mPTP) activity. Plays a role in mitochondrial uncoupling by acting as a proton transporter: proton transport uncouples the proton flows via the electron transport chain and ATP synthase to reduce the efficiency of ATP production and cause mitochondrial thermogenesis. Proton transporter activity is inhibited by ADP:ATP antiporter activity, suggesting that SLC25A5/ANT2 acts as a master regulator of mitochondrial energy output by maintaining a delicate balance between ATP production (ADP:ATP antiporter activity) and thermogenesis (proton transporter activity). Proton transporter activity requires free fatty acids as cofactor, but does not transport it. Probably mediates mitochondrial uncoupling in tissues that do not express UCP1. Also plays a key role in mPTP opening, a non-specific pore that enables free passage of the mitochondrial membranes to solutes of up to 1.5 kDa, and which contributes to cell death. It is however unclear if SLC25A5/ANT2 constitutes a pore-forming component of mPTP or regulates it. Acts as a regulator of mitophagy independently of ADP:ATP antiporter activity: promotes mitophagy via interaction with TIMM44, leading to inhibit the presequence translocase TIMM23, thereby promoting stabilization of PINK1. As part of the mitotic spindle-associated MMXD complex it may play a role in chromosome segregation. The protein is ADP/ATP translocase 2 of Bos taurus (Bovine).